A 600-amino-acid chain; its full sequence is Proline--tRNA ligase (600 aa).

This sequence belongs to the class-II aminoacyl-tRNA synthetase family. ProS type 1 subfamily. As to quaternary structure, homodimer.

Its subcellular location is the cytoplasm. It catalyses the reaction tRNA(Pro) + L-proline + ATP = L-prolyl-tRNA(Pro) + AMP + diphosphate. Catalyzes the attachment of proline to tRNA(Pro) in a two-step reaction: proline is first activated by ATP to form Pro-AMP and then transferred to the acceptor end of tRNA(Pro). As ProRS can inadvertently accommodate and process non-cognate amino acids such as alanine and cysteine, to avoid such errors it has two additional distinct editing activities against alanine. One activity is designated as 'pretransfer' editing and involves the tRNA(Pro)-independent hydrolysis of activated Ala-AMP. The other activity is designated 'posttransfer' editing and involves deacylation of mischarged Ala-tRNA(Pro). The misacylated Cys-tRNA(Pro) is not edited by ProRS. In Prochlorococcus marinus (strain AS9601), this protein is Proline--tRNA ligase.